Consider the following 557-residue polypeptide: Potassium-transporting ATPase potassium-binding subunit (557 aa).

12 helical membrane passes run 5–25 (GFLLIVTFLLVLMVLARPLGS), 63–83 (LSAILGLNMLGLAVLFFMLLG), 132–152 (GLTVQNFLSAASGIAVIFALI), 170–190 (LLRITLWVLAPVALLIALFFI), 253–273 (FVQMLAIFVIPTALCFAFGEV), 283–303 (LLWAMSVIFVICVGVVMWAEV), 329–349 (VLVSSLFAVVTTAASCGAVIA), 356–376 (ALGGMVPMWLMQIGEVVFGGV), 379–399 (GLYGMMLFVLLAVFIAGLMIG), 416–436 (LTALAILVTPTLVLMGAALAM), 484–504 (LLAFCMFVGRFGVIIPVMAIA), and 526–546 (LFVGLLIGTVLLVGALTFIPA).

Belongs to the KdpA family. As to quaternary structure, the system is composed of three essential subunits: KdpA, KdpB and KdpC.

Its subcellular location is the cell inner membrane. Part of the high-affinity ATP-driven potassium transport (or Kdp) system, which catalyzes the hydrolysis of ATP coupled with the electrogenic transport of potassium into the cytoplasm. This subunit binds the periplasmic potassium ions and delivers the ions to the membrane domain of KdpB through an intramembrane tunnel. This is Potassium-transporting ATPase potassium-binding subunit from Escherichia fergusonii (strain ATCC 35469 / DSM 13698 / CCUG 18766 / IAM 14443 / JCM 21226 / LMG 7866 / NBRC 102419 / NCTC 12128 / CDC 0568-73).